The primary structure comprises 875 residues: E3 SUMO-protein ligase SIZ1 (875 aa).

The SAP domain maps to 12–46 (LAYFRIKELKDILNQLGLPKQGKKQDLIDRVLALL). Residues 114 to 169 (KVRCICSSTMVNDSMIQCEDQRCQVWQHLNCVLIPDKPGESAEVPPVFYCELCRLS) form a PHD-type zinc finger. The segment at 349-430 (SDLEVVAESV…FNRITSLLRN (82 aa)) adopts an SP-RING-type zinc-finger fold. Zn(2+) contacts are provided by C380, H382, C403, and C406. The interval 796-820 (GGGGNEEPAPADVNSQPQIPSTETG) is disordered. Residues 808–819 (VNSQPQIPSTET) show a composition bias toward polar residues.

The protein belongs to the PIAS family.

Its subcellular location is the nucleus. It participates in protein modification; protein sumoylation. Its function is as follows. Probable SUMO E3 ligase that may regulate Pi starvation responses. This Oryza sativa subsp. japonica (Rice) protein is E3 SUMO-protein ligase SIZ1 (SIZ1).